A 327-amino-acid polypeptide reads, in one-letter code: DNA-directed RNA polymerase subunit alpha (327 aa).

Residues 1–233 form an alpha N-terminal domain (alpha-NTD) region; that stretch reads MVREKVKVST…NLFIPFLHVE (233 aa). Positions 267 to 327 are alpha C-terminal domain (alpha-CTD); sequence LAFQYIFIDQ…KKILDILEKK (61 aa).

It belongs to the RNA polymerase alpha chain family. In terms of assembly, in plastids the minimal PEP RNA polymerase catalytic core is composed of four subunits: alpha, beta, beta', and beta''. When a (nuclear-encoded) sigma factor is associated with the core the holoenzyme is formed, which can initiate transcription.

It localises to the plastid. The protein resides in the chloroplast. It catalyses the reaction RNA(n) + a ribonucleoside 5'-triphosphate = RNA(n+1) + diphosphate. Functionally, DNA-dependent RNA polymerase catalyzes the transcription of DNA into RNA using the four ribonucleoside triphosphates as substrates. The sequence is that of DNA-directed RNA polymerase subunit alpha from Nasturtium officinale (Watercress).